Here is a 44-residue protein sequence, read N- to C-terminus: Mu-conotoxin-like Cal 12.1.2f (44 aa).

Cystine bridges form between Cys-3-Cys-15, Cys-10-Cys-27, Cys-17-Cys-32, and Cys-26-Cys-38. 6'-bromotryptophan is present on Trp-16. A 4-hydroxyproline modification is found at Pro-22. 6'-bromotryptophan is present on residues Trp-36 and Trp-37. At Pro-39 the chain carries 4-hydroxyproline. The residue at position 43 (Trp-43) is a 6'-bromotryptophan.

As to expression, expressed by the venom duct.

It is found in the secreted. In terms of biological role, mu-conotoxins block voltage-gated sodium channels. This toxin reversibly blocks voltage-gated sodium channel in cephalopods, with no alteration in the voltage dependence of sodium conductance or on the kinetics of inactivation. The chain is Mu-conotoxin-like Cal 12.1.2f from Californiconus californicus (California cone).